The sequence spans 23 residues: uncharacterized protein (23 aa).

It is found in the plastid. The protein localises to the chloroplast. This is an uncharacterized protein from Zea mays (Maize).